The primary structure comprises 320 residues: Cytochrome f (320 aa).

The N-terminal stretch at 1–35 (MHTKNLFYSRPQQITQYLSAFLMMVILTRTSISSA) is a signal peptide. Residues tyrosine 36, cysteine 56, cysteine 59, and histidine 60 each coordinate heme. The chain crosses the membrane as a helical span at residues 286–306 (VQVLLFFFASIILAQIFLVLK).

It belongs to the cytochrome f family. In terms of assembly, the 4 large subunits of the cytochrome b6-f complex are cytochrome b6, subunit IV (17 kDa polypeptide, petD), cytochrome f and the Rieske protein, while the 4 small subunits are PetG, PetL, PetM and PetN. The complex functions as a dimer. The cofactor is heme.

Its subcellular location is the plastid thylakoid membrane. Component of the cytochrome b6-f complex, which mediates electron transfer between photosystem II (PSII) and photosystem I (PSI), cyclic electron flow around PSI, and state transitions. The protein is Cytochrome f of Cuscuta obtusiflora (Peruvian dodder).